Reading from the N-terminus, the 527-residue chain is Amine oxidase [flavin-containing] A (527 aa).

The residue at position 1 (M1) is an N-acetylmethionine. Residues 1-497 (MASQEKASMA…HSFWERNLPS (497 aa)) are Cytoplasmic-facing. Residue S383 is modified to Phosphoserine. The residue at position 406 (C406) is an S-8alpha-FAD cysteine. Residues 498 to 518 (VGGLLKIIGFSTSITALWIVV) traverse the membrane as a helical; Anchor for type IV membrane protein segment. Over 519–527 (YKFKLLTRS) the chain is Mitochondrial intermembrane. An interaction with membrane phospholipid headgroups region spans residues 520 to 522 (KFK).

This sequence belongs to the flavin monoamine oxidase family. Monomer, homo- or heterodimer (containing two subunits of similar size). Each subunit contains a covalently bound flavin. Enzymatically active as monomer. The cofactor is FAD.

It is found in the mitochondrion outer membrane. It carries out the reaction a secondary aliphatic amine + O2 + H2O = a primary amine + an aldehyde + H2O2. The catalysed reaction is a primary methyl amine + O2 + H2O = an aldehyde + H2O2 + NH4(+). It catalyses the reaction (R)-adrenaline + O2 + H2O = (R)-3,4-dihydroxymandelaldehyde + methylamine + H2O2. The enzyme catalyses dopamine + O2 + H2O = 3,4-dihydroxyphenylacetaldehyde + H2O2 + NH4(+). It carries out the reaction tyramine + O2 + H2O = (4-hydroxyphenyl)acetaldehyde + H2O2 + NH4(+). The catalysed reaction is (R)-noradrenaline + O2 + H2O = (R)-3,4-dihydroxymandelaldehyde + H2O2 + NH4(+). It catalyses the reaction serotonin + O2 + H2O = (5-hydroxyindol-3-yl)acetaldehyde + H2O2 + NH4(+). The enzyme catalyses kynuramine + O2 + H2O = 3-(2-aminophenyl)-3-oxopropanal + H2O2 + NH4(+). It carries out the reaction tryptamine + O2 + H2O = indole-3-acetaldehyde + H2O2 + NH4(+). The catalysed reaction is 2-phenylethylamine + O2 + H2O = 2-phenylacetaldehyde + H2O2 + NH4(+). Its function is as follows. Catalyzes the oxidative deamination of primary and some secondary amine such as neurotransmitters, with concomitant reduction of oxygen to hydrogen peroxide and has important functions in the metabolism of neuroactive and vasoactive amines in the central nervous system and peripheral tissues. Preferentially oxidizes serotonin. Also catalyzes the oxidative deamination of kynuramine to 3-(2-aminophenyl)-3-oxopropanal that can spontaneously condense to 4-hydroxyquinoline. The polypeptide is Amine oxidase [flavin-containing] A (Equus caballus (Horse)).